Consider the following 104-residue polypeptide: L-rhamnose mutarotase (104 aa).

A substrate-binding site is contributed by Y18. Catalysis depends on H22, which acts as the Proton donor. Substrate is bound by residues Y41 and 76–77 (WW).

This sequence belongs to the rhamnose mutarotase family. Homodimer.

It is found in the cytoplasm. The catalysed reaction is alpha-L-rhamnose = beta-L-rhamnose. It participates in carbohydrate metabolism; L-rhamnose metabolism. In terms of biological role, involved in the anomeric conversion of L-rhamnose. This Salmonella heidelberg (strain SL476) protein is L-rhamnose mutarotase.